A 758-amino-acid polypeptide reads, in one-letter code: Vitamin K-dependent gamma-carboxylase (758 aa).

The segment at Met-1 to Ala-22 is disordered. Ala-2 is modified (N-acetylalanine). At Ala-2–Asp-60 the chain is on the cytoplasmic side. Residues Pro-61–Gln-81 traverse the membrane as a helical segment. Residues Glu-82–Asp-113 lie on the Lumenal side of the membrane. A disulfide bridge links Cys-99 with Cys-450. Residues Trp-114–Cys-134 form a helical membrane-spanning segment. At Tyr-135–Arg-136 the chain is on the cytoplasmic side. The helical transmembrane segment at Ile-137–Trp-157 threads the bilayer. Topologically, residues Asn-158–Gln-292 are lumenal. Residue Lys-218 is the Proton acceptor of the active site. A helical transmembrane segment spans residues Leu-293 to Pro-313. The Cytoplasmic portion of the chain corresponds to Glu-314–Gln-361. The helical transmembrane segment at Leu-362–Phe-382 threads the bilayer. Over Leu-383–Phe-758 the chain is Lumenal. N-linked (GlcNAc...) asparagine glycans are attached at residues Asn-459 and Asn-550. The disordered stretch occupies residues Gly-732–Phe-758. Residues Asn-735 to Pro-747 are compositionally biased toward polar residues.

It belongs to the vitamin K-dependent gamma-carboxylase family. As to quaternary structure, monomer. May interact with CALU.

It localises to the endoplasmic reticulum membrane. It catalyses the reaction 4-carboxy-L-glutamyl-[protein] + 2,3-epoxyphylloquinone + H2O + H(+) = phylloquinol + L-glutamyl-[protein] + CO2 + O2. Its function is as follows. Mediates the vitamin K-dependent carboxylation of glutamate residues to calcium-binding gamma-carboxyglutamate (Gla) residues with the concomitant conversion of the reduced hydroquinone form of vitamin K to vitamin K epoxide. Catalyzes gamma-carboxylation of various proteins, such as blood coagulation factors (F2, F7, F9 and F10), osteocalcin (BGLAP) or matrix Gla protein (MGP). This is Vitamin K-dependent gamma-carboxylase (GGCX) from Homo sapiens (Human).